We begin with the raw amino-acid sequence, 196 residues long: Chaperone protein TorD (196 aa).

The protein belongs to the TorD/DmsD family. TorD subfamily.

The protein resides in the cytoplasm. Its function is as follows. Involved in the biogenesis of TorA. Acts on TorA before the insertion of the molybdenum cofactor and, as a result, probably favors a conformation of the apoenzyme that is competent for acquiring the cofactor. This chain is Chaperone protein TorD, found in Pasteurella multocida (strain Pm70).